The chain runs to 242 residues: Uridylate kinase (242 aa).

Residue 11-14 (KLSG) participates in ATP binding. Residues 19–24 (GNMGYG) are involved in allosteric activation by GTP. Gly-53 contributes to the UMP binding site. ATP contacts are provided by Gly-54 and Arg-58. Residues Asp-73 and 134–141 (SGNPFFTT) contribute to the UMP site. ATP contacts are provided by Thr-161, Tyr-167, and Asp-170.

This sequence belongs to the UMP kinase family. Homohexamer.

It is found in the cytoplasm. It carries out the reaction UMP + ATP = UDP + ADP. The protein operates within pyrimidine metabolism; CTP biosynthesis via de novo pathway; UDP from UMP (UMPK route): step 1/1. Its activity is regulated as follows. Allosterically activated by GTP. Inhibited by UTP. Functionally, catalyzes the reversible phosphorylation of UMP to UDP. The sequence is that of Uridylate kinase from Trichormus variabilis (strain ATCC 29413 / PCC 7937) (Anabaena variabilis).